Reading from the N-terminus, the 688-residue chain is Polyribonucleotide nucleotidyltransferase (688 aa).

Mg(2+) is bound by residues Asp484 and Asp490. The 60-residue stretch at 550-609 (PTTEIFNVAPDKIVEIIGQGGRVIKEIVEKFEVKIDLNKPSGEVKIMGNKERVLKTKEFI) folds into the KH domain. Residues 626 to 688 (DEVLEAQVKR…NKGKIALDLA (63 aa)) form the S1 motif domain.

It belongs to the polyribonucleotide nucleotidyltransferase family. Mg(2+) serves as cofactor.

The protein resides in the cytoplasm. The catalysed reaction is RNA(n+1) + phosphate = RNA(n) + a ribonucleoside 5'-diphosphate. Its function is as follows. Involved in mRNA degradation. Catalyzes the phosphorolysis of single-stranded polyribonucleotides processively in the 3'- to 5'-direction. The polypeptide is Polyribonucleotide nucleotidyltransferase (Helicobacter pylori (strain G27)).